A 965-amino-acid polypeptide reads, in one-letter code: Probable ion channel POLLUX (965 aa).

The segment covering methionine 1–proline 11 has biased composition (low complexity). Disordered regions lie at residues methionine 1–glycine 76 and glycine 108–alanine 158. Positions leucine 32 to alanine 42 are enriched in polar residues. Low complexity-rich tracts occupy residues serine 52–alanine 66 and arginine 118–serine 149. The next 4 helical transmembrane spans lie at leucine 187–tryptophan 207, alanine 251–valine 271, leucine 317–valine 337, and isoleucine 369–valine 389. RCK N-terminal domains follow at residues valine 410–valine 551 and proline 670–isoleucine 818.

Belongs to the castor/pollux (TC 1.A.1.23) family. In terms of tissue distribution, expressed in roots, leaves, stems and panicles.

Its subcellular location is the nucleus membrane. In terms of biological role, required for mycorrhizal symbiosis. The sequence is that of Probable ion channel POLLUX from Oryza sativa subsp. japonica (Rice).